A 210-amino-acid chain; its full sequence is Methylthioribulose-1-phosphate dehydratase (210 aa).

Zn(2+) contacts are provided by His94 and His96.

This sequence belongs to the aldolase class II family. MtnB subfamily. It depends on Zn(2+) as a cofactor.

It carries out the reaction 5-(methylsulfanyl)-D-ribulose 1-phosphate = 5-methylsulfanyl-2,3-dioxopentyl phosphate + H2O. It functions in the pathway amino-acid biosynthesis; L-methionine biosynthesis via salvage pathway; L-methionine from S-methyl-5-thio-alpha-D-ribose 1-phosphate: step 2/6. In terms of biological role, catalyzes the dehydration of methylthioribulose-1-phosphate (MTRu-1-P) into 2,3-diketo-5-methylthiopentyl-1-phosphate (DK-MTP-1-P). The polypeptide is Methylthioribulose-1-phosphate dehydratase (Yersinia enterocolitica serotype O:8 / biotype 1B (strain NCTC 13174 / 8081)).